The primary structure comprises 216 residues: Uridine kinase (216 aa).

16–23 (GASASGKS) is an ATP binding site.

It belongs to the uridine kinase family.

The protein localises to the cytoplasm. It catalyses the reaction uridine + ATP = UMP + ADP + H(+). It carries out the reaction cytidine + ATP = CMP + ADP + H(+). It participates in pyrimidine metabolism; CTP biosynthesis via salvage pathway; CTP from cytidine: step 1/3. The protein operates within pyrimidine metabolism; UMP biosynthesis via salvage pathway; UMP from uridine: step 1/1. In Mannheimia succiniciproducens (strain KCTC 0769BP / MBEL55E), this protein is Uridine kinase.